Consider the following 156-residue polypeptide: ATP synthase subunit b (156 aa).

A helical membrane pass occupies residues 12-32 (LAFAIFVWFCMKLVWPPITAA).

Belongs to the ATPase B chain family. As to quaternary structure, F-type ATPases have 2 components, F(1) - the catalytic core - and F(0) - the membrane proton channel. F(1) has five subunits: alpha(3), beta(3), gamma(1), delta(1), epsilon(1). F(0) has three main subunits: a(1), b(2) and c(10-14). The alpha and beta chains form an alternating ring which encloses part of the gamma chain. F(1) is attached to F(0) by a central stalk formed by the gamma and epsilon chains, while a peripheral stalk is formed by the delta and b chains.

The protein localises to the cell inner membrane. Functionally, f(1)F(0) ATP synthase produces ATP from ADP in the presence of a proton or sodium gradient. F-type ATPases consist of two structural domains, F(1) containing the extramembraneous catalytic core and F(0) containing the membrane proton channel, linked together by a central stalk and a peripheral stalk. During catalysis, ATP synthesis in the catalytic domain of F(1) is coupled via a rotary mechanism of the central stalk subunits to proton translocation. Component of the F(0) channel, it forms part of the peripheral stalk, linking F(1) to F(0). In Stutzerimonas stutzeri (strain A1501) (Pseudomonas stutzeri), this protein is ATP synthase subunit b.